Consider the following 510-residue polypeptide: Putative thymidine phosphorylase (510 aa).

The protein belongs to the thymidine/pyrimidine-nucleoside phosphorylase family. Type 2 subfamily.

It carries out the reaction thymidine + phosphate = 2-deoxy-alpha-D-ribose 1-phosphate + thymine. This is Putative thymidine phosphorylase from Nitrobacter hamburgensis (strain DSM 10229 / NCIMB 13809 / X14).